Reading from the N-terminus, the 257-residue chain is Dihydroorotate dehydrogenase B (NAD(+)), electron transfer subunit (257 aa).

Residues 2–102 (MKQEQMTVVR…LGPLGNGFPL (101 aa)) enclose the FAD-binding FR-type domain. FAD-binding positions include 53–56 (RPLS), 70–72 (IYR), and 77–78 (GT). [2Fe-2S] cluster-binding residues include C221, C226, C229, and C244.

The protein belongs to the PyrK family. In terms of assembly, heterotetramer of 2 PyrK and 2 PyrD type B subunits. It depends on [2Fe-2S] cluster as a cofactor. The cofactor is FAD.

It functions in the pathway pyrimidine metabolism; UMP biosynthesis via de novo pathway; orotate from (S)-dihydroorotate (NAD(+) route): step 1/1. Functionally, responsible for channeling the electrons from the oxidation of dihydroorotate from the FMN redox center in the PyrD type B subunit to the ultimate electron acceptor NAD(+). The sequence is that of Dihydroorotate dehydrogenase B (NAD(+)), electron transfer subunit from Geobacillus sp. (strain WCH70).